The sequence spans 256 residues: Small ribosomal subunit protein uS3 (256 aa).

The KH type-2 domain maps to 39-111 (IREFLNENFS…EVILNIIEVR (73 aa)). The tract at residues 219-256 (DTRKPFEAGNQKRGQKRRPRNDQPGQRPQQRNRNSKED) is disordered. Residues 240 to 250 (DQPGQRPQQRN) show a composition bias toward low complexity.

This sequence belongs to the universal ribosomal protein uS3 family. Part of the 30S ribosomal subunit. Forms a tight complex with proteins S10 and S14.

In terms of biological role, binds the lower part of the 30S subunit head. Binds mRNA in the 70S ribosome, positioning it for translation. This is Small ribosomal subunit protein uS3 from Acholeplasma laidlawii (strain PG-8A).